Here is a 176-residue protein sequence, read N- to C-terminus: Centromere protein R (176 aa).

Lys-8 is covalently cross-linked (Glycyl lysine isopeptide (Lys-Gly) (interchain with G-Cter in SUMO2)). Phosphoserine is present on Ser-17. The DD1 stretch occupies residues 20–50 (PSKIMRKKSITAFSPTTGTYQLSPFSSPRTP). Residue Lys-22 forms a Glycyl lysine isopeptide (Lys-Gly) (interchain with G-Cter in SUMO2) linkage. Ser-28 bears the Phosphoserine mark. Residues 34–48 (PTTGTYQLSPFSSPR) show a composition bias toward polar residues. The segment at 34 to 80 (PTTGTYQLSPFSSPRTPKEQEHRDGPSNGTRKWSVLSSPARQDSTVK) is disordered. The span at 49-58 (TPKEQEHRDG) shows a compositional bias: basic and acidic residues. Positions 60–80 (SNGTRKWSVLSSPARQDSTVK) are enriched in polar residues. Residues 63–66 (TRKW) carry the Nuclear localization signal motif. The residue at position 71 (Ser-71) is a Phosphoserine. The stretch at 82–112 (SDGFMMLLSKIERSSEKTMEIMKNLSSLQAL) forms a coiled coil. An LXXLL motif motif is present at residues 118 to 122 (LEDLL). The LXXIL motif motif lies at 171–175 (LKAIL).

In terms of assembly, homodimer; mediated by the coiled coil domain. Interacts with CCNA2 and MTA1. Interacts with NFKB1 NF-kappa-B subunit. Component of the CENPA-CAD complex, composed of CENPI, CENPK, CENPL, CENPO, CENPP, CENPQ, CENPR and CENPS. The CENPA-CAD complex interacts with the CENPA-NAC complex, at least composed of CENPA, CENPC, CENPH, CENPM, CENPN, CENPT and CENPU. Interacts with TASOR.

The protein resides in the nucleus. Its subcellular location is the chromosome. It is found in the centromere. The protein localises to the kinetochore. Transcription coregulator that can have both coactivator and corepressor functions. Involved in the coactivation of nuclear receptors for retinoid X (RXRs) and thyroid hormone (TRs) in a ligand-dependent fashion. In contrast, it does not coactivate nuclear receptors for retinoic acid, vitamin D, progesterone receptor, nor glucocorticoid. Acts as a coactivator for estrogen receptor alpha. Acts as a transcriptional corepressor via its interaction with the NFKB1 NF-kappa-B subunit, possibly by interfering with the transactivation domain of NFKB1. Induces apoptosis in breast cancer cells, but not in other cancer cells, via a caspase-2 mediated pathway that involves mitochondrial membrane permeabilization but does not require other caspases. May also act as an inhibitor of cyclin A-associated kinase. Also acts a component of the CENPA-CAD (nucleosome distal) complex, a complex recruited to centromeres which is involved in assembly of kinetochore proteins, mitotic progression and chromosome segregation. May be involved in incorporation of newly synthesized CENPA into centromeres via its interaction with the CENPA-NAC complex. The polypeptide is Centromere protein R (Itgb3bp) (Rattus norvegicus (Rat)).